The sequence spans 1284 residues: DNA-directed RNA polymerase subunit beta (1284 aa).

The protein belongs to the RNA polymerase beta chain family. As to quaternary structure, the RNAP catalytic core consists of 2 alpha, 1 beta, 1 beta' and 1 omega subunit. When a sigma factor is associated with the core the holoenzyme is formed, which can initiate transcription.

The enzyme catalyses RNA(n) + a ribonucleoside 5'-triphosphate = RNA(n+1) + diphosphate. Its function is as follows. DNA-dependent RNA polymerase catalyzes the transcription of DNA into RNA using the four ribonucleoside triphosphates as substrates. The polypeptide is DNA-directed RNA polymerase subunit beta (Mesoplasma florum (strain ATCC 33453 / NBRC 100688 / NCTC 11704 / L1) (Acholeplasma florum)).